We begin with the raw amino-acid sequence, 167 residues long: NADH-quinone oxidoreductase subunit B (167 aa).

The [4Fe-4S] cluster site is built by Cys40, Cys41, Cys105, and Cys134.

The protein belongs to the complex I 20 kDa subunit family. As to quaternary structure, NDH-1 is composed of 14 different subunits. Subunits NuoB, C, D, E, F, and G constitute the peripheral sector of the complex. The cofactor is [4Fe-4S] cluster.

It is found in the cell inner membrane. The enzyme catalyses a quinone + NADH + 5 H(+)(in) = a quinol + NAD(+) + 4 H(+)(out). Functionally, NDH-1 shuttles electrons from NADH, via FMN and iron-sulfur (Fe-S) centers, to quinones in the respiratory chain. The immediate electron acceptor for the enzyme in this species is believed to be ubiquinone. Couples the redox reaction to proton translocation (for every two electrons transferred, four hydrogen ions are translocated across the cytoplasmic membrane), and thus conserves the redox energy in a proton gradient. This is NADH-quinone oxidoreductase subunit B from Campylobacter jejuni (strain RM1221).